The primary structure comprises 180 residues: Pro-glucagon (180 aa).

The first 20 residues, 1–20, serve as a signal peptide directing secretion; it reads MKSIYFVAGLFVMLVQGSWQ. Residues 23 to 56 are disordered; that stretch reads LQDTEEKPRSFSTSQTDLLDDPDQMNEDKRHSQG. Ser-54 is modified (phosphoserine). Residues 84–89 constitute a propeptide that is removed on maturation; that stretch reads NRNEIA. Ser-105 and Ser-108 each carry phosphoserine. Arginine amide is present on Arg-127. The propeptide occupies 131-145; sequence DFPEEVTIVEELRRR. Phosphoserine occurs at positions 150 and 152.

It belongs to the glucagon family. Post-translationally, proglucagon is post-translationally processed in a tissue-specific manner in pancreatic A cells and intestinal L cells. In pancreatic A cells, the major bioactive hormone is glucagon cleaved by PCSK2/PC2. In the intestinal L cells PCSK1/PC1 liberates GLP-1, GLP-2, glicentin and oxyntomodulin. GLP-1 is further N-terminally truncated by post-translational processing in the intestinal L cells resulting in GLP-1(7-37) GLP-1-(7-36)amide. The C-terminal amidation is neither important for the metabolism of GLP-1 nor for its effects on the endocrine pancreas. As to expression, glucagon is secreted in the A cells of the islets of Langerhans. GLP-1, GLP-2, oxyntomodulin and glicentin are secreted from enteroendocrine cells throughout the gastrointestinal tract. GLP-1 and GLP-2 are also secreted in selected neurons in the brain.

The protein localises to the secreted. In terms of biological role, plays a key role in glucose metabolism and homeostasis. Regulates blood glucose by increasing gluconeogenesis and decreasing glycolysis. A counterregulatory hormone of insulin, raises plasma glucose levels in response to insulin-induced hypoglycemia. Plays an important role in initiating and maintaining hyperglycemic conditions in diabetes. Functionally, potent stimulator of glucose-dependent insulin release. Also stimulates insulin release in response to IL6. Plays important roles on gastric motility and the suppression of plasma glucagon levels. May be involved in the suppression of satiety and stimulation of glucose disposal in peripheral tissues, independent of the actions of insulin. Has growth-promoting activities on intestinal epithelium. May also regulate the hypothalamic pituitary axis (HPA) via effects on LH, TSH, CRH, oxytocin, and vasopressin secretion. Increases islet mass through stimulation of islet neogenesis and pancreatic beta cell proliferation. Inhibits beta cell apoptosis. Stimulates intestinal growth and up-regulates villus height in the small intestine, concomitant with increased crypt cell proliferation and decreased enterocyte apoptosis. The gastrointestinal tract, from the stomach to the colon is the principal target for GLP-2 action. Plays a key role in nutrient homeostasis, enhancing nutrient assimilation through enhanced gastrointestinal function, as well as increasing nutrient disposal. Stimulates intestinal glucose transport and decreases mucosal permeability. Its function is as follows. Significantly reduces food intake. Inhibits gastric emptying in humans. Suppression of gastric emptying may lead to increased gastric distension, which may contribute to satiety by causing a sensation of fullness. In terms of biological role, may modulate gastric acid secretion and the gastro-pyloro-duodenal activity. May play an important role in intestinal mucosal growth in the early period of life. The polypeptide is Pro-glucagon (GCG) (Octodon degus (Degu)).